The primary structure comprises 533 residues: MSSAKRRLYSLIQNATEPYAFEPDLAVNLDIADLINQTGGNLPREAAFAIVRKVNDRNPTVAYLALNLLDICVKNCGYAFRLQIASKEFLNELVRRFPERPPSRLNKIQVMILSLIEEWRKTICRVDRYKEDLGFIRDMHRLLSYKGYTFPEIDKENLAVLSQKSVLKTAEELEKEDREAMSAKLQELIRRGTPADLAEANKLMKVMAGYDTEQKQKYKEHVLVDLEKVKRKAALFGEMLNEVSESDKLASGDLYDELAYSLKAAQRKVDKILEEMSPEDDSYVTVSDLKSLIASLLTQYDHLLEGDFSSARTVAADNNSLLQATTESAKSNSKTSANASNTQSAMDLLIDLDIGSDAQSPSLPASSSQMPTSSFNMESLSQSLLGTVEAPAEVGAISLTESFNSPVSNSSPNVPINNFTSTCAFENSHLNFQITPKSKTRDQVVLLATYTNLSPYDTVENLQSFIAVPKKYNLVLQPQSGTNLSPLQKDGIYQEMIVTKLLDVTELPVRFKLTYKVNGRSQEYTGQSSIRLL.

Positions 15-151 constitute a VHS domain; the sequence is ATEPYAFEPD…LLSYKGYTFP (137 aa). Positions 178 to 305 constitute a GAT domain; it reads REAMSAKLQE…LLTQYDHLLE (128 aa). Phosphoserine is present on Ser-320. The GAE domain maps to 417–532; the sequence is NNFTSTCAFE…EYTGQSSIRL (116 aa).

The protein belongs to the GGA protein family.

Its subcellular location is the golgi apparatus. The protein localises to the trans-Golgi network. Its function is as follows. May play a role in the regulation of membrane traffic through the trans-Golgi network. The chain is Probable ADP-ribosylation factor-binding protein C25H2.16c from Schizosaccharomyces pombe (strain 972 / ATCC 24843) (Fission yeast).